The chain runs to 1024 residues: Multidrug resistance protein MdtC (1024 aa).

Transmembrane regions (helical) follow at residues 12–32 (VATT…FSLL), 333–353 (EVER…FLFL), 360–380 (LIPA…MYLC), 387–407 (LSLM…IVVL), 431–451 (VGFT…PLLL), 463–483 (FAVT…TLTP), 528–548 (WVMV…ISIP), 853–873 (LWLI…LYES), 875–895 (VHPL…LLAL), 897–917 (LFDA…IGIV), 953–973 (PILM…ISSG), and 984–1004 (ITIV…TPVV).

It belongs to the resistance-nodulation-cell division (RND) (TC 2.A.6) family. MdtC subfamily. In terms of assembly, part of a tripartite efflux system composed of MdtA, MdtB and MdtC. MdtC forms a heteromultimer with MdtB.

Its subcellular location is the cell inner membrane. This chain is Multidrug resistance protein MdtC, found in Yersinia enterocolitica serotype O:8 / biotype 1B (strain NCTC 13174 / 8081).